The sequence spans 1188 residues: NF-X1-type zinc finger protein NFXL1 (1188 aa).

Basic and acidic residues predominate over residues Met1–His15. Disordered stretches follow at residues Met1 to Asp52 and Gln65 to Glu195. Composition is skewed to polar residues over residues His19 to Val34 and Ala168 to Val186. The segment at Cys223–Gln279 adopts an RING-type; degenerate zinc-finger fold. 9 NF-X1-type zinc fingers span residues Cys335–Ala353, Cys390–Val409, Cys454–Leu473, Cys513–Val532, Cys572–Lys607, Cys611–Glu630, Cys668–Thr686, Cys721–Gln751, and Cys760–Phe781. The region spanning Pro894 to Ala963 is the R3H domain. Residues Ser1100–Glu1188 are disordered. Polar residues-rich tracts occupy residues Ala1126–Arg1138 and Glu1159–Lys1169.

It belongs to the NFX1 family. Expressed in seedlings, roots, stems, leaves, buds, flowers and siliques.

It is found in the nucleus. It functions in the pathway protein modification; protein ubiquitination. Functionally, mediates E2-dependent ubiquitination. Confers resistance to osmotic stress such as high salinity. Promotes H(2)O(2) production. Negative regulator of some defense-related genes via an salicylic acid (SA)-dependent signaling pathway. Confers susceptibility to the compatible phytopathogen Pseudomonas syringae pv. tomato strain DC3000 (Pst DC3000). Mediates resistance to type A trichothecenes (phytotoxins produced by phytopathogenic fungi). The sequence is that of NF-X1-type zinc finger protein NFXL1 (NFXL1) from Arabidopsis thaliana (Mouse-ear cress).